The chain runs to 307 residues: Dioxygenase swnH1 (307 aa).

Fe cation-binding residues include histidine 149, aspartate 151, and histidine 227.

This sequence belongs to the PhyH family. Homodimer. Fe cation serves as cofactor.

Its pathway is mycotoxin biosynthesis. In terms of biological role, dioxygenase; part of the gene cluster that mediates the biosynthesis of swainsonine (SW), a cytotoxic fungal alkaloid and a potential cancer therapy drug. Swainsonine production occurs via a multibranched pathway and is dispensable for fungal colonization of plants and infection of insect hosts. The first step of swainsonine biosynthesis is the production of the precursor pipecolic acid (PA) via conversion of L-lysine (Lys) to 1-piperideine-6-carboxylate (P6C) by the aminotransferase swnA, the latter being further reduced to PA by the reductase swnR. The PKS-NRPS hybrid synthetase swnK uptakes and condensates PA and malonyl-CoA with and without skipping of the ketoreductase (KR) domain in order to produce 3 intermediates, 1-oxoindolizidine, (1S)-1-hydroxyindolizin, and (1R)-1-hydroxyindolizine; with the transisomer (1S)-1-hydroxyindolizin being predominant. The terminal thioester reductase (TE) domain of swnK is involved in reduction of the thioester bond to release the intermediate aldehydes. The oxidoreductase swnN could contribute to the reduction of 1-oxoindolizidine to (1S)-1-hydroxyindolizin and (1R)-1-hydroxyindolizine, contributing to the major route of SW production. The dioxygenase swnH2 would be responsible for the oxidization of (1R)-1-hydroxyindolizine into (1R,2S)-1,2-dihydroxyindolizine and of (1S)-1-hydroxyindolizin to yield both (1R,2S)-1,2-dihydroxyindolizine and (1S,2S)-1,2-dihydroxyindolizine. The dioxygenase swnH1 then performs the conversion of the 1,2-dihydroxyindolizine epimers to SW. The sequence is that of Dioxygenase swnH1 from Arthroderma benhamiae (strain ATCC MYA-4681 / CBS 112371) (Trichophyton mentagrophytes).